Reading from the N-terminus, the 252-residue chain is Ribosomal RNA small subunit methyltransferase NEP1 (252 aa).

S-adenosyl-L-methionine is bound by residues methionine 176, glycine 209, glycine 214, and 227–232 (ISNYPL).

It belongs to the class IV-like SAM-binding methyltransferase superfamily. RNA methyltransferase NEP1 family. Homodimer. Part of the small subunit (SSU) processome, composed of more than 70 proteins and the RNA chaperone small nucleolar RNA (snoRNA) U3.

Its subcellular location is the nucleus. The protein localises to the nucleolus. It catalyses the reaction a pseudouridine in rRNA + S-adenosyl-L-methionine = an N(1)-methylpseudouridine in rRNA + S-adenosyl-L-homocysteine + H(+). S-adenosyl-L-methionine-dependent pseudouridine N(1)-methyltransferase that methylates a pseudouridine in 18S rRNA. Involved the biosynthesis of the hypermodified N1-methyl-N3-(3-amino-3-carboxypropyl) pseudouridine (m1acp3-Psi) conserved in eukaryotic 18S rRNA. Also has an essential role in 40S ribosomal subunit biogenesis independent on its methyltransferase activity, facilitating the incorporation of ribosomal protein S19 during the formation of pre-ribosomes. In terms of biological role, S-adenosyl-L-methionine-dependent pseudouridine N(1)-methyltransferase that methylates pseudouridine at position in 18S rRNA. Involved the biosynthesis of the hypermodified N1-methyl-N3-(3-amino-3-carboxypropyl) pseudouridine (m1acp3-Psi) conserved in eukaryotic 18S rRNA. Is not able to methylate uridine at this position. Also has an essential role in 40S ribosomal subunit biogenesis independent on its methyltransferase activity, facilitating the incorporation of ribosomal protein S19 during the formation of pre-ribosomes. Part of the small subunit (SSU) processome, first precursor of the small eukaryotic ribosomal subunit. During the assembly of the SSU processome in the nucleolus, many ribosome biogenesis factors, an RNA chaperone and ribosomal proteins associate with the nascent pre-rRNA and work in concert to generate RNA folding, modifications, rearrangements and cleavage as well as targeted degradation of pre-ribosomal RNA by the RNA exosome. This Drosophila melanogaster (Fruit fly) protein is Ribosomal RNA small subunit methyltransferase NEP1.